Consider the following 426-residue polypeptide: Histidine--tRNA ligase (426 aa).

It belongs to the class-II aminoacyl-tRNA synthetase family. Homodimer.

The protein localises to the cytoplasm. It catalyses the reaction tRNA(His) + L-histidine + ATP = L-histidyl-tRNA(His) + AMP + diphosphate + H(+). The protein is Histidine--tRNA ligase of Microcystis aeruginosa (strain NIES-843 / IAM M-2473).